The following is a 129-amino-acid chain: Large ribosomal subunit protein uL22 (129 aa).

Belongs to the universal ribosomal protein uL22 family. As to quaternary structure, part of the 50S ribosomal subunit.

Its function is as follows. This protein binds specifically to 23S rRNA; its binding is stimulated by other ribosomal proteins, e.g. L4, L17, and L20. It is important during the early stages of 50S assembly. It makes multiple contacts with different domains of the 23S rRNA in the assembled 50S subunit and ribosome. Functionally, the globular domain of the protein is located near the polypeptide exit tunnel on the outside of the subunit, while an extended beta-hairpin is found that lines the wall of the exit tunnel in the center of the 70S ribosome. This Bartonella quintana (strain Toulouse) (Rochalimaea quintana) protein is Large ribosomal subunit protein uL22.